Reading from the N-terminus, the 116-residue chain is U16-barytoxin-Tl1b (116 aa).

The signal sequence occupies residues 1-20 (MKTIIVFLSLLVLATKFGDA). Residues 21–74 (KEGVNQKQKKEVTQNEFREEYLNEMAAMSLVQQLEAIERALFENEAGRNSRQKR) constitute a propeptide that is removed on maturation. 3 cysteine pairs are disulfide-bonded: cysteine 75–cysteine 90, cysteine 82–cysteine 95, and cysteine 89–cysteine 110.

It belongs to the neurotoxin 14 (magi-1) family. 06 (ICK-Trit) subfamily. In terms of tissue distribution, expressed by the venom gland.

It localises to the secreted. Its function is as follows. Ion channel inhibitor. In Trittame loki (Brush-footed trapdoor spider), this protein is U16-barytoxin-Tl1b.